The primary structure comprises 236 residues: Peptidase E (236 aa).

Active-site charge relay system residues include Ser-122, Asp-137, and His-159.

It belongs to the peptidase S51 family.

It is found in the cytoplasm. It carries out the reaction Dipeptidase E catalyzes the hydrolysis of dipeptides Asp-|-Xaa. It does not act on peptides with N-terminal Glu, Asn or Gln, nor does it cleave isoaspartyl peptides.. Its function is as follows. Hydrolyzes dipeptides containing N-terminal aspartate residues. May play a role in allowing the cell to use peptide aspartate to spare carbon otherwise required for the synthesis of the aspartate family of amino acids. The protein is Peptidase E of Shewanella sp. (strain W3-18-1).